Here is a 577-residue protein sequence, read N- to C-terminus: Pentatricopeptide repeat-containing protein At1g63400 (577 aa).

15 PPR repeats span residues 49–83, 84–118, 119–153, 154–188, 189–223, 224–258, 259–293, 294–328, 329–363, 364–398, 399–433, 434–468, 469–503, 504–538, and 539–573; these read GSGD…RPLP, SIFE…GISH, NLYT…GYEP, SIVT…GYRP, DTIT…GCQP, NLVT…KIEA, NVVI…GVRP, NVIT…KINP, NVVT…SIDP, DIFT…DCFP, NVVT…GLVG, NTVT…GVHP, NIMT…KMEP, TIYT…GVKP, and DVII…GPLP.

This sequence belongs to the PPR family. P subfamily.

In Arabidopsis thaliana (Mouse-ear cress), this protein is Pentatricopeptide repeat-containing protein At1g63400.